We begin with the raw amino-acid sequence, 165 residues long: V-type proton ATPase 16 kDa proteolipid subunit (165 aa).

Over 1–10 (MSSTFSGDET) the chain is Lumenal. Residues 11–33 (APFFGFLGAAAALVFSCMGAAYG) traverse the membrane as a helical segment. The Cytoplasmic portion of the chain corresponds to 34–55 (TAKSGVGVASMGVMRPELVMKS). Residues 56-76 (IVPVVMAGVLGIYGLIIAVII) traverse the membrane as a helical segment. Over 77-95 (STGINPKAKSYYLFDGYAH) the chain is Lumenal. Residues 96 to 117 (LSSGLACGLAGLSAGMAIGIVG) form a helical membrane-spanning segment. The Cytoplasmic segment spans residues 118-129 (DAGVRANAQQPK). The chain crosses the membrane as a helical span at residues 130-155 (LFVGMILILIFAEALALYGLIVGIIL). The Lumenal portion of the chain corresponds to 156 to 165 (SSRAGQSRAD).

The protein belongs to the V-ATPase proteolipid subunit family. V-ATPase is a heteromultimeric enzyme composed of a peripheral catalytic V1 complex (main components: subunits A, B, C, D, E, and F) attached to an integral membrane V0 proton pore complex (main component: the proteolipid protein; which is present as a hexamer that forms the proton-conducting pore). In terms of tissue distribution, higher expression in leaves, followed by roots and weakly in flowers. Expression in leaves is light-dependent.

It is found in the vacuole membrane. Its function is as follows. Proton-conducting pore forming subunit of the membrane integral V0 complex of vacuolar ATPase. V-ATPase is responsible for acidifying a variety of intracellular compartments in eukaryotic cells. Necessary for the crassulacean acid metabolism. The sequence is that of V-type proton ATPase 16 kDa proteolipid subunit from Kalanchoe daigremontiana (Devil's backbone).